A 679-amino-acid polypeptide reads, in one-letter code: Methionine--tRNA ligase (679 aa).

The 'HIGH' region motif lies at 14-24 (PYANGSIHLGH). Zn(2+)-binding residues include C145, C148, C158, and C161. The short motif at 331–335 (KMSKS) is the 'KMSKS' region element. K334 serves as a coordination point for ATP. The tRNA-binding domain occupies 577–679 (TFAAVDLRVA…SGAKPGQRIK (103 aa)).

It belongs to the class-I aminoacyl-tRNA synthetase family. MetG type 1 subfamily. As to quaternary structure, homodimer. Zn(2+) serves as cofactor.

The protein resides in the cytoplasm. The catalysed reaction is tRNA(Met) + L-methionine + ATP = L-methionyl-tRNA(Met) + AMP + diphosphate. Its function is as follows. Is required not only for elongation of protein synthesis but also for the initiation of all mRNA translation through initiator tRNA(fMet) aminoacylation. The sequence is that of Methionine--tRNA ligase from Pseudomonas putida (strain ATCC 700007 / DSM 6899 / JCM 31910 / BCRC 17059 / LMG 24140 / F1).